The sequence spans 564 residues: Dihydroxy-acid dehydratase (564 aa).

[2Fe-2S] cluster is bound at residue Cys53. Asp85 lines the Mg(2+) pocket. Cys126 lines the [2Fe-2S] cluster pocket. Positions 127 and 128 each coordinate Mg(2+). N6-carboxylysine is present on Lys128. Cys203 lines the [2Fe-2S] cluster pocket. A Mg(2+)-binding site is contributed by Glu454. Ser480 serves as the catalytic Proton acceptor.

It belongs to the IlvD/Edd family. In terms of assembly, homodimer. Requires [2Fe-2S] cluster as cofactor. Mg(2+) serves as cofactor.

It carries out the reaction (2R)-2,3-dihydroxy-3-methylbutanoate = 3-methyl-2-oxobutanoate + H2O. It catalyses the reaction (2R,3R)-2,3-dihydroxy-3-methylpentanoate = (S)-3-methyl-2-oxopentanoate + H2O. The protein operates within amino-acid biosynthesis; L-isoleucine biosynthesis; L-isoleucine from 2-oxobutanoate: step 3/4. It functions in the pathway amino-acid biosynthesis; L-valine biosynthesis; L-valine from pyruvate: step 3/4. Functions in the biosynthesis of branched-chain amino acids. Catalyzes the dehydration of (2R,3R)-2,3-dihydroxy-3-methylpentanoate (2,3-dihydroxy-3-methylvalerate) into 2-oxo-3-methylpentanoate (2-oxo-3-methylvalerate) and of (2R)-2,3-dihydroxy-3-methylbutanoate (2,3-dihydroxyisovalerate) into 2-oxo-3-methylbutanoate (2-oxoisovalerate), the penultimate precursor to L-isoleucine and L-valine, respectively. This chain is Dihydroxy-acid dehydratase, found in Mycobacterium leprae (strain TN).